The chain runs to 309 residues: Probable lipid kinase YegS-like (309 aa).

Positions 1–134 constitute a DAGKc domain; it reads MAPSHWRLIL…VDLLRIDADH (134 aa). ATP-binding positions include T39, 65–71, and T96; that span reads GDGTLSE. Residues L219, D222, and L224 each coordinate Mg(2+). E280 functions as the Proton acceptor in the catalytic mechanism.

The protein belongs to the diacylglycerol/lipid kinase family. YegS lipid kinase subfamily. It depends on Mg(2+) as a cofactor. Requires Ca(2+) as cofactor.

It is found in the cytoplasm. Probably phosphorylates lipids; the in vivo substrate is unknown. The chain is Probable lipid kinase YegS-like from Xanthomonas axonopodis pv. citri (strain 306).